A 257-amino-acid chain; its full sequence is Deoxyribose-phosphate aldolase (257 aa).

Catalysis depends on aspartate 102, which acts as the Proton donor/acceptor. Lysine 165 functions as the Schiff-base intermediate with acetaldehyde in the catalytic mechanism. Lysine 199 (proton donor/acceptor) is an active-site residue.

This sequence belongs to the DeoC/FbaB aldolase family. DeoC type 2 subfamily.

The protein resides in the cytoplasm. The catalysed reaction is 2-deoxy-D-ribose 5-phosphate = D-glyceraldehyde 3-phosphate + acetaldehyde. It participates in carbohydrate degradation; 2-deoxy-D-ribose 1-phosphate degradation; D-glyceraldehyde 3-phosphate and acetaldehyde from 2-deoxy-alpha-D-ribose 1-phosphate: step 2/2. Catalyzes a reversible aldol reaction between acetaldehyde and D-glyceraldehyde 3-phosphate to generate 2-deoxy-D-ribose 5-phosphate. The polypeptide is Deoxyribose-phosphate aldolase (Photobacterium profundum (strain SS9)).